Consider the following 186-residue polypeptide: ATP synthase subunit delta (186 aa).

This sequence belongs to the ATPase delta chain family. In terms of assembly, F-type ATPases have 2 components, F(1) - the catalytic core - and F(0) - the membrane proton channel. F(1) has five subunits: alpha(3), beta(3), gamma(1), delta(1), epsilon(1). F(0) has three main subunits: a(1), b(2) and c(10-14). The alpha and beta chains form an alternating ring which encloses part of the gamma chain. F(1) is attached to F(0) by a central stalk formed by the gamma and epsilon chains, while a peripheral stalk is formed by the delta and b chains.

It localises to the cell inner membrane. F(1)F(0) ATP synthase produces ATP from ADP in the presence of a proton or sodium gradient. F-type ATPases consist of two structural domains, F(1) containing the extramembraneous catalytic core and F(0) containing the membrane proton channel, linked together by a central stalk and a peripheral stalk. During catalysis, ATP synthesis in the catalytic domain of F(1) is coupled via a rotary mechanism of the central stalk subunits to proton translocation. In terms of biological role, this protein is part of the stalk that links CF(0) to CF(1). It either transmits conformational changes from CF(0) to CF(1) or is implicated in proton conduction. This Nitrobacter winogradskyi (strain ATCC 25391 / DSM 10237 / CIP 104748 / NCIMB 11846 / Nb-255) protein is ATP synthase subunit delta.